Here is a 148-residue protein sequence, read N- to C-terminus: Cathelicidin-1 (148 aa).

The signal sequence occupies residues 1–17 (MLSCWVLLLALLGGACA). Residues 18–122 (LPAPLGYSQA…TCVDSMADPV (105 aa)) constitute a propeptide that is removed on maturation. Intrachain disulfides connect cysteine 75–cysteine 86 and cysteine 97–cysteine 114.

It belongs to the cathelicidin family. Detected in gizzard, liver, small intestine, large intestine, cloaca, bursa of Fabricius, gall bladder, lung, trachea, kidney, testis and bone marrow.

It is found in the secreted. Functionally, binds bacterial lipopolysaccharide (LPS). Has potent antimicrobial activity against Gram-positive and Gram-negative bacteria (in vitro). Has hemolytic activity (in vitro). May play a role in the innate immune response. This chain is Cathelicidin-1 (CATHL1), found in Gallus gallus (Chicken).